A 739-amino-acid polypeptide reads, in one-letter code: Alcohol dehydrogenase (quinone), dehydrogenase subunit (739 aa).

An N-terminal signal peptide occupies residues 1 to 35; it reads MISAVFGKRRSLSRTLTAGTICAALISGYATMASA. Glu-97 provides a ligand contact to pyrroloquinoline quinone. Cys-143 and Cys-144 are disulfide-bonded. Pyrroloquinoline quinone is bound at residue Arg-149. Glu-217 provides a ligand contact to Ca(2+). Residue Thr-279 coordinates pyrroloquinoline quinone. Ca(2+) contacts are provided by Asn-299 and Asp-344. Residue Asp-344 is the Proton acceptor of the active site. Residues Lys-371 and Ile-585 each coordinate pyrroloquinoline quinone. The Cytochrome c domain maps to 635-739; sequence FDSKRTDNGY…NADGIPEQLP (105 aa). Heme c contacts are provided by Cys-651, Cys-654, His-655, and Met-694.

This sequence belongs to the bacterial PQQ dehydrogenase family. In terms of assembly, the alcohol dehydrogenase multicomponent enzyme system is composed of a dehydrogenase subunit I (AdhA) and a cytochrome c subunit II (AdhB). It depends on pyrroloquinoline quinone as a cofactor. The cofactor is Ca(2+). Requires heme c as cofactor.

It is found in the cell membrane. It carries out the reaction ethanol + a ubiquinone = a ubiquinol + acetaldehyde. Dehydrogenase component of the alcohol dehydrogenase multicomponent enzyme system which is involved in the production of acetic acid and in the ethanol oxidase respiratory chain. Quinohemoprotein alcohol dehydrogenase (ADH) catalyzes the oxidation of ethanol to acetaldehyde by transferring electrons to the ubiquinone embedded in the membrane phospholipids. The electrons transfer from ethanol to membranous ubiquinone occurs from pyrroloquinoline quinone (PQQ) to one heme c in subunit I (AdhA), and finally to two heme c in subunit II (AdhB). Besides ubiquinone reduction, ADH also has a ubiquinol (QH2) oxidation reaction which mediates electron transfer from ubiquinol to the non-energy generating bypass oxidase system. The electrons transfer occurs from ubiquinol (QH2) to the additional heme c within subunit II (AdhB). This chain is Alcohol dehydrogenase (quinone), dehydrogenase subunit, found in Komagataeibacter europaeus (Gluconacetobacter europaeus).